The primary structure comprises 1269 residues: Protein flightless-1 homolog (1269 aa).

An N-acetylmethionine modification is found at Met-1. The segment at 1 to 427 is interaction with LRRFIP1 and LRRFIP2; sequence MEATGVLPFV…SGPKDPMARK (427 aa). 16 LRR repeats span residues 7 to 32, 33 to 55, 56 to 78, 80 to 103, 104 to 126, 127 to 149, 150 to 173, 175 to 196, 197 to 222, 223 to 245, 247 to 268, 269 to 291, 293 to 316, 318 to 339, 340 to 363, and 365 to 385; these read LPFV…VKAM, TSLR…LAAL, QKLE…LSSL, SLRA…IFKL, DDLS…LENA, KNML…LFIN, LTDL…MRRL, HLQT…QLPA, MTAL…LEGL, SNLA…LYTL, SLRR…IDQW, VHVE…ICKL, KLKK…IGKL, NLEE…LCRC, PKLR…HFLT, and IEVL…PADR. Position 21 is an N6-acetyllysine (Lys-21). A Phosphoserine modification is found at Ser-406. Ser-436 carries the post-translational modification Phosphoserine; by SGK3. The disordered stretch occupies residues 452–473; that stretch reads VAQEKNKKQEESADARAPSGKV. The segment covering 453-465 has biased composition (basic and acidic residues); it reads AQEKNKKQEESAD. The tract at residues 495-827 is interaction with ACTL6A; that stretch reads VGQLPGLTIW…TVSRSLEGTE (333 aa). Gelsolin-like repeat units lie at residues 509-591, 629-703, and 758-831; these read FVPV…EEFL, NIKL…PEFW, and ELMP…AQVF. Position 818 is a phosphothreonine; by SGK3 (Thr-818). Residues Ser-856 and Ser-860 each carry the phosphoserine modification. Residues 951–975 form a disordered region; it reads KKEDKEEKAEGKEGEEATAEAEEKQ. Basic and acidic residues predominate over residues 952-965; that stretch reads KEDKEEKAEGKEGE. The segment covering 966-975 has biased composition (acidic residues); sequence EATAEAEEKQ. 2 Gelsolin-like repeats span residues 1075–1143 and 1181–1254; these read TDSS…PENF and KCSD…QHAF.

In terms of assembly, interacts with actin, ACTL6A, NCOA2 and CARM1. Interacts with LRRFIP1, LRRFIP2 and MYD88. Upon LPS stimulation, LRRFIP2 competes for MYD88-binding. LRRFIP1 constitutively blocks the interaction with MyD88, even in the absence of LPS. Interacts with the nuclear receptors ESR1 and THRB. Interacts with SGK3. Interacts (via the gelsolin-like region) with TMOD1. Interacts with (via the gelsolin-like region) TMOD3. Interacts with LMOD2, VCL, GSN and DES. Strongest expression in skeletal muscle with high expression also in the heart and lung.

The protein resides in the nucleus. It is found in the cytoplasm. It localises to the cytoskeleton. Its subcellular location is the microtubule organizing center. The protein localises to the centrosome. The protein resides in the cell projection. It is found in the podosome. It localises to the cell junction. Its subcellular location is the focal adhesion. Functionally, is a regulator of actin polymerization, required for proper myofibril organization and regulation of the length of sarcomeric thin filaments. It also plays a role in the assembly of cardiomyocyte cell adhesion complexes. Regulates cytoskeletal rearrangements involved in cytokinesis and cell migration, by inhibiting Rac1-dependent paxillin phosphorylation. May play a role as coactivator in transcriptional activation by hormone-activated nuclear receptors (NR) and acts in cooperation with NCOA2 and CARM1. Involved in estrogen hormone signaling. The chain is Protein flightless-1 homolog (FLII) from Homo sapiens (Human).